Reading from the N-terminus, the 62-residue chain is MDINASKVDPKLLELLVCPLTKGRLSYDPEANELVSEKARLAYPIRDGVPIMLVSEARKIED.

Belongs to the UPF0434 family.

The sequence is that of UPF0434 protein R03186 from Rhizobium meliloti (strain 1021) (Ensifer meliloti).